A 585-amino-acid polypeptide reads, in one-letter code: Switch-associated protein 70 (585 aa).

One can recognise a PH domain in the interval 210 to 306 (DVLKQGYMMK…WIQAIYSTIH (97 aa)). Residues 316-529 (HKEARQRRKE…VKKKLEMATH (214 aa)) are a coiled coil. Residues 347–373 (ANENKQQELESVRKKLEEAASRAADEE) form a disordered region. The segment covering 351-373 (KQQELESVRKKLEEAASRAADEE) has biased composition (basic and acidic residues).

In terms of assembly, the SWAP complex consists of NPM1, NCL, PARP1 and SWAP70. In terms of processing, tyrosine-phosphorylated. In terms of tissue distribution, spleen. Expressed only in B-cells that have been induced to switch to various Ig isotypes.

It is found in the cytoplasm. It localises to the cell membrane. The protein resides in the nucleus. Its subcellular location is the cell projection. The protein localises to the lamellipodium. It is found in the cytoskeleton. Functionally, phosphatidylinositol 3,4,5-trisphosphate-dependent guanine nucleotide exchange factor (GEF) which, independently of RAS, transduces signals from tyrosine kinase receptors to RAC. It also mediates signaling of membrane ruffling. Regulates the actin cytoskeleton as an effector or adapter protein in response to agonist stimulated phosphatidylinositol (3,4)-bisphosphate production and cell protrusion. The chain is Switch-associated protein 70 (Swap70) from Mus musculus (Mouse).